The following is a 252-amino-acid chain: 7-cyano-7-deazaguanine synthase (252 aa).

22-32 lines the ATP pocket; the sequence is FSGGQDSTTCL. Residues cysteine 215, cysteine 230, cysteine 233, and cysteine 236 each contribute to the Zn(2+) site.

This sequence belongs to the QueC family. Requires Zn(2+) as cofactor.

The enzyme catalyses 7-carboxy-7-deazaguanine + NH4(+) + ATP = 7-cyano-7-deazaguanine + ADP + phosphate + H2O + H(+). The protein operates within purine metabolism; 7-cyano-7-deazaguanine biosynthesis. In terms of biological role, catalyzes the ATP-dependent conversion of 7-carboxy-7-deazaguanine (CDG) to 7-cyano-7-deazaguanine (preQ(0)). The polypeptide is 7-cyano-7-deazaguanine synthase (Granulibacter bethesdensis (strain ATCC BAA-1260 / CGDNIH1)).